We begin with the raw amino-acid sequence, 320 residues long: Glycerol-3-phosphate dehydrogenase [NAD(P)+] (320 aa).

Ser-14, Phe-15, Arg-35, and Lys-109 together coordinate NADPH. Residues Lys-109 and Gly-137 each coordinate sn-glycerol 3-phosphate. Ala-141 serves as a coordination point for NADPH. Positions 192, 248, 258, 259, and 260 each coordinate sn-glycerol 3-phosphate. The active-site Proton acceptor is the Lys-192. Arg-259 is an NADPH binding site. NADPH-binding residues include Leu-283 and Glu-285.

Belongs to the NAD-dependent glycerol-3-phosphate dehydrogenase family.

Its subcellular location is the cytoplasm. The catalysed reaction is sn-glycerol 3-phosphate + NAD(+) = dihydroxyacetone phosphate + NADH + H(+). The enzyme catalyses sn-glycerol 3-phosphate + NADP(+) = dihydroxyacetone phosphate + NADPH + H(+). Its pathway is membrane lipid metabolism; glycerophospholipid metabolism. Its function is as follows. Catalyzes the reduction of the glycolytic intermediate dihydroxyacetone phosphate (DHAP) to sn-glycerol 3-phosphate (G3P), the key precursor for phospholipid synthesis. The protein is Glycerol-3-phosphate dehydrogenase [NAD(P)+] of Rickettsia typhi (strain ATCC VR-144 / Wilmington).